The following is a 75-amino-acid chain: Large ribosomal subunit protein bL31 (75 aa).

4 residues coordinate Zn(2+): cysteine 16, cysteine 18, cysteine 37, and cysteine 40.

It belongs to the bacterial ribosomal protein bL31 family. Type A subfamily. In terms of assembly, part of the 50S ribosomal subunit. It depends on Zn(2+) as a cofactor.

Functionally, binds the 23S rRNA. The sequence is that of Large ribosomal subunit protein bL31 from Legionella pneumophila (strain Paris).